Here is a 246-residue protein sequence, read N- to C-terminus: Probable cytokinin riboside 5'-monophosphate phosphoribohydrolase LOGL5 (246 aa).

Basic and acidic residues predominate over residues 1–10; sequence MMMENSREQQ. Residues 1–28 form a disordered region; sequence MMMENSREQQPESSPANNNSKKKKKKKT. Residues Glu-103, 121 to 122, 138 to 144, and Thr-150 contribute to the substrate site; these read RK and GYGTLEE.

It belongs to the LOG family. In terms of tissue distribution, expressed in roots and leaves.

The catalysed reaction is N(6)-(dimethylallyl)adenosine 5'-phosphate + H2O = N(6)-dimethylallyladenine + D-ribose 5-phosphate. It carries out the reaction 9-ribosyl-trans-zeatin 5'-phosphate + H2O = trans-zeatin + D-ribose 5-phosphate. Functionally, cytokinin-activating enzyme working in the direct activation pathway. Phosphoribohydrolase that converts inactive cytokinin nucleotides to the biologically active free-base forms. This chain is Probable cytokinin riboside 5'-monophosphate phosphoribohydrolase LOGL5 (LOGL5), found in Oryza sativa subsp. japonica (Rice).